The sequence spans 163 residues: Nucleotide-binding protein all4662 (163 aa).

It belongs to the YajQ family.

Its function is as follows. Nucleotide-binding protein. This chain is Nucleotide-binding protein all4662, found in Nostoc sp. (strain PCC 7120 / SAG 25.82 / UTEX 2576).